The primary structure comprises 52 residues: Dibenzothiophene metabolism operon protein NahQ/DoxH (52 aa).

It participates in aromatic compound metabolism; naphthalene degradation. Its function is as follows. May be involved in the conversion of 2-hydroxy-4-(2'-oxo-3,5-cyclohexadienyl)-buta-2,4-dienoate to cis-O-hydroxybenzylidenepyruvate. DoxH and DoxJ encode different enzymes that may have interchangeable functions. The polypeptide is Dibenzothiophene metabolism operon protein NahQ/DoxH (nahQ) (Pseudomonas putida (Arthrobacter siderocapsulatus)).